A 640-amino-acid polypeptide reads, in one-letter code: DNA gyrase subunit B (640 aa).

In terms of domain architecture, Toprim spans 423 to 537 (AELYIVEGDS…NGNIYIAQPP (115 aa)). Residues glutamate 429, aspartate 502, and aspartate 504 each contribute to the Mg(2+) site.

The protein belongs to the type II topoisomerase GyrB family. In terms of assembly, heterotetramer, composed of two GyrA and two GyrB chains. In the heterotetramer, GyrA contains the active site tyrosine that forms a transient covalent intermediate with DNA, while GyrB binds cofactors and catalyzes ATP hydrolysis. Mg(2+) serves as cofactor. The cofactor is Mn(2+). Requires Ca(2+) as cofactor.

It localises to the cytoplasm. The enzyme catalyses ATP-dependent breakage, passage and rejoining of double-stranded DNA.. Functionally, a type II topoisomerase that negatively supercoils closed circular double-stranded (ds) DNA in an ATP-dependent manner to modulate DNA topology and maintain chromosomes in an underwound state. Negative supercoiling favors strand separation, and DNA replication, transcription, recombination and repair, all of which involve strand separation. Also able to catalyze the interconversion of other topological isomers of dsDNA rings, including catenanes and knotted rings. Type II topoisomerases break and join 2 DNA strands simultaneously in an ATP-dependent manner. The sequence is that of DNA gyrase subunit B from Spiroplasma citri.